The sequence spans 65 residues: Toxin AaHIT4 (65 aa).

The 64-residue stretch at 1-64 (EHGYLLNKYT…LWNYKTNKCD (64 aa)) folds into the LCN-type CS-alpha/beta domain. 4 disulfide bridges follow: Cys12–Cys63, Cys16–Cys38, Cys23–Cys45, and Cys27–Cys47.

This sequence belongs to the long (4 C-C) scorpion toxin superfamily. Sodium channel inhibitor family. Expressed by the venom gland.

The protein resides in the secreted. Its function is as follows. Has a toxic effect on insects and mammals and is capable of competing with anti-insect scorpion toxins for binding to the sodium channel (Nav) of insects. It also modulates the binding of alpha-type and beta-type anti-mammal scorpion toxins to the mammal sodium channel. It may act on both site 3 and site 4 of voltage-gated sodium channels. The sequence is that of Toxin AaHIT4 from Androctonus australis (Sahara scorpion).